We begin with the raw amino-acid sequence, 851 residues long: Phosphatidate phosphatase LPIN3 (851 aa).

Positions M1–I108 are N-LIP. Disordered regions lie at residues S114 to D385 and Q400 to L432. Positions G140–K151 are enriched in basic residues. The short motif at R141–R148 is the Nuclear localization signal element. Phosphothreonine is present on T159. Phosphoserine is present on residues S161, S162, and S224. A compositionally biased stretch (low complexity) spans G268–S286. A compositionally biased stretch (basic and acidic residues) spans S418–E429. S463 bears the Phosphoserine mark. Basic and acidic residues predominate over residues S542–E559. A disordered region spans residues S542 to K591. The span at S578–T587 shows a compositional bias: pro residues. Residues Y590–E792 are C-LIP. The DXDXT motif motif lies at D644 to T648. An LXXIL motif motif is present at residues L655–L659.

The protein belongs to the lipin family. It depends on Mg(2+) as a cofactor. As to expression, significant expression in intestine and other regions of the gastrointestinal tract.

It localises to the nucleus. The catalysed reaction is a 1,2-diacyl-sn-glycero-3-phosphate + H2O = a 1,2-diacyl-sn-glycerol + phosphate. With respect to regulation, inhibited by N-ethylmaleimide. Magnesium-dependent phosphatidate phosphatase enzyme which catalyzes the conversion of phosphatidic acid to diacylglycerol during triglyceride, phosphatidylcholine and phosphatidylethanolamine biosynthesis therefore regulates fatty acid metabolism. The protein is Phosphatidate phosphatase LPIN3 of Homo sapiens (Human).